Reading from the N-terminus, the 438-residue chain is Na(+)/H(+) antiporter NhaA (438 aa).

11 helical membrane passes run 23 to 43, 62 to 82, 104 to 124, 133 to 153, 162 to 182, 185 to 205, 212 to 232, 302 to 322, 337 to 357, 372 to 392, and 410 to 430; these read FGGI…NSFL, FFIG…LFFL, SFPV…YFFL, GFGI…MLLG, VFLI…IALF, TNLK…LAIL, SLIP…QSGI, FLAP…NAGV, LGVI…ITFI, WWHI…SMFI, and IAIL…LFAL.

It belongs to the NhaA Na(+)/H(+) (TC 2.A.33) antiporter family.

It localises to the cell inner membrane. It catalyses the reaction Na(+)(in) + 2 H(+)(out) = Na(+)(out) + 2 H(+)(in). In terms of biological role, na(+)/H(+) antiporter that extrudes sodium in exchange for external protons. This is Na(+)/H(+) antiporter NhaA from Helicobacter pylori (strain J99 / ATCC 700824) (Campylobacter pylori J99).